Reading from the N-terminus, the 500-residue chain is NAD(P)H-quinone oxidoreductase chain 4, chloroplastic (500 aa).

14 helical membrane passes run 4–24 (FPWL…IFFF), 37–57 (ICIC…HFQL), 84–104 (GLSI…TLAA), 111–129 (SRLF…IGSF), 134–154 (LLLF…LLSM), 167–187 (FILY…GMGL), 208–228 (ALEI…SPII), 242–262 (HYST…YGLV), 272–292 (AHSI…IYAA), 305–325 (IAYS…SITD), 330–350 (GAIL…FLAG), 374–396 (IFTM…GFVA), 416–436 (ILIT…SLSM), and 462–482 (LFVS…PDFV).

This sequence belongs to the complex I subunit 4 family.

The protein localises to the plastid. Its subcellular location is the chloroplast thylakoid membrane. It catalyses the reaction a plastoquinone + NADH + (n+1) H(+)(in) = a plastoquinol + NAD(+) + n H(+)(out). It carries out the reaction a plastoquinone + NADPH + (n+1) H(+)(in) = a plastoquinol + NADP(+) + n H(+)(out). In Liriodendron tulipifera (Tuliptree), this protein is NAD(P)H-quinone oxidoreductase chain 4, chloroplastic.